Reading from the N-terminus, the 2046-residue chain is Protein TIC 214 (2046 aa).

6 helical membrane-spanning segments follow: residues 18–38 (VSGP…LPFG), 54–74 (LYGI…FLSM), 79–99 (IYAA…YTFC), 125–145 (ILSL…LLAN), 163–183 (ISFM…FINL), and 214–234 (TFSV…PLIF). Disordered stretches follow at residues 278–299 (DEDR…EDRS), 320–472 (ARSV…VPRE), and 1833–1898 (AKDS…EDEI). Composition is skewed to basic and acidic residues over residues 322-335 (SVAE…EHRS), 344-368 (SVAE…RSVA), and 378-457 (AKKD…RSVA). Low complexity predominate over residues 1833–1866 (AKDSNANDINAKDSNANDINANDSNAKDSNANDI). Residues 1882 to 1898 (NAKDSNADVPKKKEDEI) show a composition bias toward basic and acidic residues.

The protein belongs to the TIC214 family. Part of the Tic complex.

The protein resides in the plastid. The protein localises to the chloroplast inner membrane. Involved in protein precursor import into chloroplasts. May be part of an intermediate translocation complex acting as a protein-conducting channel at the inner envelope. This chain is Protein TIC 214, found in Pinus koraiensis (Korean pine).